A 418-amino-acid chain; its full sequence is Gamma-glutamyl phosphate reductase (418 aa).

This sequence belongs to the gamma-glutamyl phosphate reductase family.

The protein resides in the cytoplasm. It catalyses the reaction L-glutamate 5-semialdehyde + phosphate + NADP(+) = L-glutamyl 5-phosphate + NADPH + H(+). The protein operates within amino-acid biosynthesis; L-proline biosynthesis; L-glutamate 5-semialdehyde from L-glutamate: step 2/2. Catalyzes the NADPH-dependent reduction of L-glutamate 5-phosphate into L-glutamate 5-semialdehyde and phosphate. The product spontaneously undergoes cyclization to form 1-pyrroline-5-carboxylate. The polypeptide is Gamma-glutamyl phosphate reductase (Desulfotalea psychrophila (strain LSv54 / DSM 12343)).